Reading from the N-terminus, the 261-residue chain is Aquaporin-8 (261 aa).

At 1–36 (MSGEQTPMCSMDLPEVKVKTSMAGRCRVFWYEQYVQ) the chain is on the cytoplasmic side. A helical transmembrane segment spans residues 37 to 57 (PCIVELVGSALFIFIGCLSVI). A Cysteine persulfide modification is found at Cys-53. Cysteine sulfenic acid (-SOH) is present on Cys-53. Residues 58–84 (ENSPNTGLLQPALAHGLALGLIIATLG) are Extracellular-facing. A helical membrane pass occupies residues 85–105 (NISGGHFNPAVSLAVTVIGGL). The NPA 1 motif lies at 92-94 (NPA). At 106 to 107 (KT) the chain is on the cytoplasmic side. A helical transmembrane segment spans residues 108-128 (MLLIPYWISQLFGGLIGAALA). Residues 129–156 (KVVSPEERFWNASGAAFAIVQEQEQVAE) are Extracellular-facing. A glycan (N-linked (GlcNAc...) asparagine) is linked at Asn-139. The helical transmembrane segment at 157 to 177 (ALGIEIILTMLLVLAVCMGAV) threads the bilayer. The Cytoplasmic segment spans residues 178–183 (NEKTMG). Residues 184–204 (PLAPFSIGFSVIVDILAGGSI) form a helical membrane-spanning segment. At 205 to 228 (SGACMNPARAFGPAVMAGYWDFHW) the chain is on the extracellular side. An NPA 2 motif is present at residues 210–212 (NPA). The chain crosses the membrane as a helical span at residues 229-249 (IYWLGPLLAGLFVGLLIRLLI). At 250-261 (GDEKTRLILKSR) the chain is on the cytoplasmic side.

The protein belongs to the MIP/aquaporin (TC 1.A.8) family. In terms of processing, sulfenylation at Cys-53(C53-SOH) when hydrogen peroxide flows through the AQP8 channel, making it susceptible to hydrogen sulfide produced by CBS. Persulfidation at Cys-53 is required to gate AQP8 channel; under stress condition, hydrogen peroxide accumulates in the cell leading to CBS activation that produces hydrogen sulfide inducing persulfidation of oxidized Cys-53 (C53-SOH). Post-translationally, N-glycosylated. Expressed in placenta. Highly expressed in the epithelial layer of gall-bladders. Expressed in heart, kidney, submandibular gland, liver, small intestine, colon, testes, and epididymis. In testes, expressed in spermatogenic cells.

Its subcellular location is the cell membrane. The protein localises to the mitochondrion inner membrane. It localises to the apical cell membrane. It is found in the basolateral cell membrane. The protein resides in the smooth endoplasmic reticulum membrane. The enzyme catalyses H2O(in) = H2O(out). It catalyses the reaction urea(in) = urea(out). The catalysed reaction is NH4(+)(in) = NH4(+)(out). It carries out the reaction H2O2(out) = H2O2(in). The enzyme catalyses formamide(out) = formamide(in). It catalyses the reaction methylamine(out) = methylamine(in). With respect to regulation, reversibly gated by a two-step sulfenylation-persulfidation process in cells undergoing diverse stresses. Its function is as follows. Channel that allows the facilitated permeation of water and uncharged molecules, such as hydrogen peroxide and the neutral form of ammonia (NH3), through cellular membranes such as plasma membrane, inner mitochondrial membrane and endoplasmic reticulum membrane of several tissues. The transport of ammonia neutral form induces a parallel transport of proton, at alkaline pH when the concentration of ammonia is high. However, it is unclear whether the transport of proton takes place via the aquaporin or via an endogenous pathway. Also, may transport ammonia analogs such as formamide and methylamine, a transport favourited at basic pH due to the increase of unprotonated (neutral) form, which is expected to favor diffusion. In vitro, may be also permeable to urea but not to glycerol. Does not transport urea or glycerol. The water transport mechanism is mercury- and copper-sensitive and passive in response to osmotic driving forces. At the canicular plasma membrane, mediates the osmotic transport of water toward the bile canaliculus and facilitates the cAMP-induced bile canalicular water secretion, a process involved in bile formation. In addition, mediates the hydrogen peroxide release from hepatocyte mitochondria that modulates the SREBF2-mediated cholesterol synthesis and facilitates the mitochondrial ammonia uptake which is metabolized into urea, mainly under glucagon stimulation. In B cells, transports the CYBB-generated hydrogen peroxide from the external leaflet of the plasma membrane to the cytosol to promote B cell activation and differentiation for signal amplification. In the small intestine and colon system, mediates water transport through mitochondria and apical membrane of epithelial cells. May play an important role in the adaptive response of proximal tubule cells to acidosis possibly facilitating mitochondrial ammonia transport. The sequence is that of Aquaporin-8 from Mus musculus (Mouse).